Consider the following 515-residue polypeptide: 2-isopropylmalate synthase (515 aa).

Residues 5-267 (VIIFDTTLRD…HTGLDHKEIH (263 aa)) enclose the Pyruvate carboxyltransferase domain. The Mn(2+) site is built by D14, H202, H204, and N238. The segment at 392–515 (KLNYLSVQSG…EMKQQKFATV (124 aa)) is regulatory domain.

Belongs to the alpha-IPM synthase/homocitrate synthase family. LeuA type 1 subfamily. Homodimer. Requires Mn(2+) as cofactor.

It is found in the cytoplasm. The enzyme catalyses 3-methyl-2-oxobutanoate + acetyl-CoA + H2O = (2S)-2-isopropylmalate + CoA + H(+). The protein operates within amino-acid biosynthesis; L-leucine biosynthesis; L-leucine from 3-methyl-2-oxobutanoate: step 1/4. In terms of biological role, catalyzes the condensation of the acetyl group of acetyl-CoA with 3-methyl-2-oxobutanoate (2-ketoisovalerate) to form 3-carboxy-3-hydroxy-4-methylpentanoate (2-isopropylmalate). In Vibrio atlanticus (strain LGP32) (Vibrio splendidus (strain Mel32)), this protein is 2-isopropylmalate synthase.